The chain runs to 173 residues: Putative metal-dependent hydrolase BCG9842_B2589 (173 aa).

Residues His-65, His-156, and His-160 each contribute to the Zn(2+) site.

It belongs to the metal hydrolase YfiT family. As to quaternary structure, homodimer. Zn(2+) serves as cofactor.

It localises to the cytoplasm. In terms of biological role, possible metal-dependent hydrolase. This chain is Putative metal-dependent hydrolase BCG9842_B2589, found in Bacillus cereus (strain G9842).